Here is a 373-residue protein sequence, read N- to C-terminus: Chorismate synthase (373 aa).

NADP(+)-binding residues include arginine 48 and arginine 54. FMN-binding positions include 125 to 127 (RSS), 248 to 249 (NA), glycine 288, 303 to 307 (KPTSS), and arginine 329.

It belongs to the chorismate synthase family. As to quaternary structure, homotetramer. Requires FMNH2 as cofactor.

It carries out the reaction 5-O-(1-carboxyvinyl)-3-phosphoshikimate = chorismate + phosphate. It participates in metabolic intermediate biosynthesis; chorismate biosynthesis; chorismate from D-erythrose 4-phosphate and phosphoenolpyruvate: step 7/7. Catalyzes the anti-1,4-elimination of the C-3 phosphate and the C-6 proR hydrogen from 5-enolpyruvylshikimate-3-phosphate (EPSP) to yield chorismate, which is the branch point compound that serves as the starting substrate for the three terminal pathways of aromatic amino acid biosynthesis. This reaction introduces a second double bond into the aromatic ring system. The sequence is that of Chorismate synthase from Colwellia psychrerythraea (strain 34H / ATCC BAA-681) (Vibrio psychroerythus).